Reading from the N-terminus, the 354-residue chain is MTLLKNDTFLRALLKQPVEYTPIWMMRQAGRYLPEYKATRAKAGSFLDLCKNTELATEVTIQPLERFDLDAAILFSDILTVPDAMGLGLYFAEGEGPKFKRAMQHEADIAKLHVPDMEKLQYVFDAVTSIRKALDGRVPLIGFSGSPFTLACYMVEGGGSKEFRTIKTMMYSRPDLLHKILDTNAQAVTAYLNAQIDAGAQAVQIFDTWGGVLSDAAFKEFSLKYIRQIVAGLKRESEGRRVPVIVFAKGGGLWLESMAQIGADALGLDWTCNIGEARRRVGNQVALQGNFDPSALFGTPESIRAEVARILADYGHGSGHVFNLGHGINQHADPEHAKILVDTVHELSRQYHGG.

Substrate-binding positions include 27 to 31 (RQAGR), Asp-77, Tyr-153, Thr-208, and His-326.

This sequence belongs to the uroporphyrinogen decarboxylase family. In terms of assembly, homodimer.

The protein localises to the cytoplasm. It carries out the reaction uroporphyrinogen III + 4 H(+) = coproporphyrinogen III + 4 CO2. It participates in porphyrin-containing compound metabolism; protoporphyrin-IX biosynthesis; coproporphyrinogen-III from 5-aminolevulinate: step 4/4. Functionally, catalyzes the decarboxylation of four acetate groups of uroporphyrinogen-III to yield coproporphyrinogen-III. This Neisseria meningitidis serogroup C / serotype 2a (strain ATCC 700532 / DSM 15464 / FAM18) protein is Uroporphyrinogen decarboxylase.